We begin with the raw amino-acid sequence, 124 residues long: Large ribosomal subunit protein uL18 (124 aa).

It belongs to the universal ribosomal protein uL18 family. Part of the 50S ribosomal subunit; part of the 5S rRNA/L5/L18/L25 subcomplex. Contacts the 5S and 23S rRNAs.

This is one of the proteins that bind and probably mediate the attachment of the 5S RNA into the large ribosomal subunit, where it forms part of the central protuberance. This Frankia casuarinae (strain DSM 45818 / CECT 9043 / HFP020203 / CcI3) protein is Large ribosomal subunit protein uL18.